A 178-amino-acid chain; its full sequence is MDPFGSSSVPPCSTSDLPEPKLYFVRLSPHAVPPVRATHGAAGYDLFSAYDIKVPARGRALVPTDLVFQFPPGCYGRIAPRSGLAAKFFIDVGAGVIDPDYRGNVSVVLFNFSESSFNIRRGDRVAQLILERIMVPELSELTQLGETDRGASGFGSTGMGAVDRNQRSVLEWLTPGSR.

Belongs to the dUTPase family. Mg(2+) serves as cofactor.

It catalyses the reaction dUTP + H2O = dUMP + diphosphate + H(+). The protein operates within pyrimidine metabolism; dUMP biosynthesis; dUMP from dCTP (dUTP route): step 2/2. Functionally, this enzyme is involved in nucleotide metabolism: it produces dUMP, the immediate precursor of thymidine nucleotides and it decreases the intracellular concentration of dUTP so that uracil cannot be incorporated into DNA. This Fowl adenovirus A serotype 1 (strain CELO / Phelps) (FAdV-1) protein is Deoxyuridine 5'-triphosphate nucleotidohydrolase.